The following is a 109-amino-acid chain: uncharacterized protein (109 aa).

The helical transmembrane segment at 63 to 85 (LFVKTFFACTYIIMLAFQVYIFL) threads the bilayer.

Its subcellular location is the membrane. This is an uncharacterized protein from Saccharomyces cerevisiae (strain ATCC 204508 / S288c) (Baker's yeast).